The sequence spans 102 residues: NADH-quinone oxidoreductase subunit K 2 (102 aa).

The next 3 membrane-spanning stretches (helical) occupy residues 5–25 (FEHV…CVLV), 30–50 (LIML…AFVG), and 65–85 (LIIM…VVYL).

This sequence belongs to the complex I subunit 4L family. In terms of assembly, NDH-1 is composed of 14 different subunits. Subunits NuoA, H, J, K, L, M, N constitute the membrane sector of the complex.

The protein resides in the cell inner membrane. It catalyses the reaction a quinone + NADH + 5 H(+)(in) = a quinol + NAD(+) + 4 H(+)(out). Its function is as follows. NDH-1 shuttles electrons from NADH, via FMN and iron-sulfur (Fe-S) centers, to quinones in the respiratory chain. The immediate electron acceptor for the enzyme in this species is believed to be ubiquinone. Couples the redox reaction to proton translocation (for every two electrons transferred, four hydrogen ions are translocated across the cytoplasmic membrane), and thus conserves the redox energy in a proton gradient. The polypeptide is NADH-quinone oxidoreductase subunit K 2 (Geobacter sulfurreducens (strain ATCC 51573 / DSM 12127 / PCA)).